A 383-amino-acid chain; its full sequence is L-lactate dehydrogenase (383 aa).

Residues 1 to 380 (MIISSGNDYR…NADCLVQAIK (380 aa)) enclose the FMN hydroxy acid dehydrogenase domain. Tyrosine 24 is a substrate binding site. Serine 106 and glutamine 127 together coordinate FMN. Residue tyrosine 129 participates in substrate binding. Threonine 155 is an FMN binding site. Substrate is bound at residue arginine 164. Residue lysine 251 coordinates FMN. Residue histidine 275 is the Proton acceptor of the active site. Arginine 278 contacts substrate. Position 306–330 (306–330 (DSGIRNGLDVVRMLALGADTVLLGR)) interacts with FMN.

Belongs to the FMN-dependent alpha-hydroxy acid dehydrogenase family. Requires FMN as cofactor.

The protein resides in the cell inner membrane. It carries out the reaction (S)-lactate + A = pyruvate + AH2. Its function is as follows. Catalyzes the conversion of L-lactate to pyruvate. Is coupled to the respiratory chain. This Acinetobacter baumannii (strain AB307-0294) protein is L-lactate dehydrogenase.